The chain runs to 432 residues: Ornithine decarboxylase, chloroplastic (432 aa).

Lysine 95 is modified (N6-(pyridoxal phosphate)lysine). Pyridoxal 5'-phosphate contacts are provided by residues serine 227, glycine 265, and 298–301 (EPGR). Residue 341-342 (YD) coordinates substrate. Residue cysteine 377 is the Proton donor; shared with dimeric partner of the active site. Residue aspartate 378 coordinates substrate. Pyridoxal 5'-phosphate is bound at residue tyrosine 406.

It belongs to the Orn/Lys/Arg decarboxylase class-II family. In terms of assembly, homodimer. Only the dimer is catalytically active, as the active sites are constructed of residues from both monomers. The cofactor is pyridoxal 5'-phosphate.

The protein resides in the plastid. It is found in the chloroplast. The catalysed reaction is L-lysine + H(+) = cadaverine + CO2. It carries out the reaction L-ornithine + H(+) = putrescine + CO2. The protein operates within alkaloid biosynthesis; nicotine biosynthesis. Its pathway is amine and polyamine biosynthesis; putrescine biosynthesis via L-ornithine pathway; putrescine from L-ornithine: step 1/1. Repressed by alpha-difluoromethylornithine (DFMO), 5,5'-dithiobis-(2-nitrobenzoic acid) (DTNB) and salicylaldehyde. Its function is as follows. Involved in the biosynthesis of pyridine alkaloid natural products, leading mainly to the production of anabasine, anatabine, nicotine and nornicotine, effective deterrents against herbivores with antiparasitic and pesticide properties (neurotoxins); nornicotine serves as the precursor in the synthesis of the carcinogen compound N'-nitrosonornicotine (NNN). Catalyzes the first and rate-limiting step of polyamine biosynthesis that converts ornithine into putrescine, which is the precursor for the polyamines, spermidine and spermine. Can also use, with a lower efficiency, L-lysine as substrate to produce cadaverine. Polyamines are essential for cell proliferation and are implicated in cellular processes, ranging from DNA replication to apoptosis. This chain is Ornithine decarboxylase, chloroplastic, found in Nicotiana glutinosa (Tobacco).